The primary structure comprises 923 residues: SPX and EXS domain-containing protein 1 (923 aa).

The 326-residue stretch at 1–326 (MKFGKKLRFE…PMNSSIKLDQ (326 aa)) folds into the SPX domain. Low complexity-rich tracts occupy residues 94–147 (QEQS…QQQQ) and 186–195 (TTTTTTTTTT). 2 disordered regions span residues 94-150 (QEQS…QDLK) and 185-208 (PTTT…FKNK). The next 9 membrane-spanning stretches (helical) occupy residues 382 to 402 (LKLG…IILF), 416 to 436 (FVST…VWLW), 471 to 491 (ASFL…TVTG), 499 to 519 (PAQV…FFPF), 529 to 551 (LLFI…RALF), 591 to 611 (SIAL…QCIL), 620 to 640 (IHLG…FSAL), 655 to 675 (ILWC…DVVV), and 700 to 720 (WSYY…TLTI). One can recognise an EXS domain in the interval 585–785 (RCNQVNSIAL…KNEVPKVESP (201 aa)). The interval 793 to 871 (SSYPYRQDNF…NNSPSGSNSS (79 aa)) is disordered.

Belongs to the SYG1 (TC 2.A.94) family.

The protein resides in the membrane. The polypeptide is SPX and EXS domain-containing protein 1 (Dictyostelium discoideum (Social amoeba)).